Consider the following 455-residue polypeptide: Nucleoside-triphosphatase (455 aa).

Catalysis depends on Glu168, which acts as the Proton acceptor.

The protein belongs to the GDA1/CD39 NTPase family.

It is found in the nucleus. It carries out the reaction a ribonucleoside 5'-triphosphate + H2O = a ribonucleoside 5'-diphosphate + phosphate + H(+). In terms of biological role, might be involved in RNA transport out of nuclei. The chain is Nucleoside-triphosphatase from Pisum sativum (Garden pea).